The primary structure comprises 98 residues: Dehydrin HIRD11 (98 aa).

A disordered region spans residues 1 to 98 (MAGLINKIGD…HSSSSDSDSD (98 aa)). Residues 19–72 (KEGEHKKEEEHKKHVDEHKSGEHKEGIVDKIKDKIHGGEGKSHDGEGKSHDGEK) are compositionally biased toward basic and acidic residues. Residues 73-82 (KKKKDKKEKK) are compositionally biased toward basic residues.

This sequence belongs to the KS-type dehydrin family. Interacts with PXL1. Post-translationally, phosphorylated in vivo. Phosphorylated in vitro by PXL1. As to expression, highly expressed in the cambial zone of the stem vasculature (at protein level). Expressed in roots, rosettes leaves, stems, cauline leaves, flowers and siliques.

The protein resides in the cytoplasm. It is found in the nucleus. Its function is as follows. Intrinsically disordered and metal-binding protein. Binds to the divalent cations cobalt, nickel, copper and zinc, but not to magnesium, calcium, manganese or cadmium. Binding to metal ions decreases disordered state, decreases susceptibility to trypsin and promotes self-association. Can reduce the formation of reactive oxygen species (ROS) in a copper-ascorbate in vitro system. This chain is Dehydrin HIRD11, found in Arabidopsis thaliana (Mouse-ear cress).